The following is a 67-amino-acid chain: Conotoxin Cl6.7 (67 aa).

The N-terminal stretch at 1–24 is a signal peptide; it reads MKVTAVLMVAVLVLTACQLTTANT. The propeptide occupies 25–39; that stretch reads TDYVRRIPARKSTMS. 3 disulfide bridges follow: cysteine 43–cysteine 58, cysteine 50–cysteine 62, and cysteine 57–cysteine 66.

Belongs to the conotoxin O1 superfamily. In terms of tissue distribution, expressed by the venom duct.

It is found in the secreted. This Californiconus californicus (California cone) protein is Conotoxin Cl6.7.